A 126-amino-acid chain; its full sequence is MDQYQKIIIKGKQYYSTKDIKDFSPEFFYGCNNKLRRIIEKKNIPNKDIVYGYYKNNELIVCDDTYPKTTLYLSEKWVNKFVPEATPETEVIPNIQKLPPIIDIDNAEMWCDENSNPYNTRIRDCP.

This is an uncharacterized protein from Acanthamoeba polyphaga mimivirus (APMV).